The chain runs to 315 residues: MTRTDIERPVRTQAEEKARYEGNKLSKRLARETTRALSDYNMIEEGDRVMVCLSGGKDSYAMLDILMALQKRAPFRFELIAVNLDQKQPGFPADILPNYLSSLGVPFHIETQDTYSIVTRVLAEGKTMCSLCSRLRRGILYRVADELGATKIALGHHRDDILGTLFLNLFYGGKLKGMPPKLVSDDGRHTVIRPLAYIAETDLIAYAELKQFPIIPCNLCGSQENLKRKEVSRMVQEWDRKFPGRSWNVFNALSRVVPSHLMDRDLFDFVGLKPTGLPDANGDIAFDEPQTDDACDASAPTDGLNEQQIVFSRFS.

A PP-loop motif motif is present at residues 54-59 (SGGKDS). Residues cysteine 129, cysteine 132, and cysteine 220 each contribute to the [4Fe-4S] cluster site.

This sequence belongs to the TtcA family. As to quaternary structure, homodimer. It depends on Mg(2+) as a cofactor. The cofactor is [4Fe-4S] cluster.

It is found in the cytoplasm. It catalyses the reaction cytidine(32) in tRNA + S-sulfanyl-L-cysteinyl-[cysteine desulfurase] + AH2 + ATP = 2-thiocytidine(32) in tRNA + L-cysteinyl-[cysteine desulfurase] + A + AMP + diphosphate + H(+). It participates in tRNA modification. Its function is as follows. Catalyzes the ATP-dependent 2-thiolation of cytidine in position 32 of tRNA, to form 2-thiocytidine (s(2)C32). The sulfur atoms are provided by the cysteine/cysteine desulfurase (IscS) system. This is tRNA-cytidine(32) 2-sulfurtransferase from Bordetella avium (strain 197N).